The sequence spans 404 residues: MDSSAGVSPCNSPYGSGLLDVPLKLRPRASHYRARSLVIGGKEHVRALPLGGDAPIPIQTMWKEPLIGADLQSIVDRLLELEQLGCDVVRFAVPDRESAELFVALCARTRMPLVADIHFDYRLALRCMDGPVAKVRINPGNIGVRERVRAVVEKARATGTALRIGVNTGSLPGVVKRAVAARYADGMQSVNARAEALVQTAFAEAAYLDQLHFDRVVLSLKASTVAETVRANELFAQQSDIPLHLGVTEAGPLVSGIVKSTLAFSQLLSRNIGATVRVSLSDSMEHEVLAAREILAECGKRAGGVRLVSCPRCGRIGFDVHAFVRRWQKELFSLKKDITVAVMGCVVNGPGEGKHADLGISGAEDSVIFFKRGKIVRRIQVRDLCADERTRIIDAAFKEELSSL.

Positions 310, 313, 345, and 352 each coordinate [4Fe-4S] cluster.

The protein belongs to the IspG family. [4Fe-4S] cluster is required as a cofactor.

It carries out the reaction (2E)-4-hydroxy-3-methylbut-2-enyl diphosphate + oxidized [flavodoxin] + H2O + 2 H(+) = 2-C-methyl-D-erythritol 2,4-cyclic diphosphate + reduced [flavodoxin]. Its pathway is isoprenoid biosynthesis; isopentenyl diphosphate biosynthesis via DXP pathway; isopentenyl diphosphate from 1-deoxy-D-xylulose 5-phosphate: step 5/6. Its function is as follows. Converts 2C-methyl-D-erythritol 2,4-cyclodiphosphate (ME-2,4cPP) into 1-hydroxy-2-methyl-2-(E)-butenyl 4-diphosphate. This chain is 4-hydroxy-3-methylbut-2-en-1-yl diphosphate synthase (flavodoxin), found in Treponema pallidum (strain Nichols).